Here is a 282-residue protein sequence, read N- to C-terminus: Large ribosomal subunit protein uL2 (282 aa).

2 disordered regions span residues K31 to G55 and L223 to R282. 2 stretches are compositionally biased toward basic residues: residues T34–G55 and V270–R282.

It belongs to the universal ribosomal protein uL2 family. Part of the 50S ribosomal subunit. Forms a bridge to the 30S subunit in the 70S ribosome.

One of the primary rRNA binding proteins. Required for association of the 30S and 50S subunits to form the 70S ribosome, for tRNA binding and peptide bond formation. It has been suggested to have peptidyltransferase activity; this is somewhat controversial. Makes several contacts with the 16S rRNA in the 70S ribosome. The polypeptide is Large ribosomal subunit protein uL2 (Anaeromyxobacter dehalogenans (strain 2CP-C)).